The primary structure comprises 261 residues: uncharacterized protein (261 aa).

One can recognise an ABC transporter domain in the interval 1 to 236 (MEIKEITIIG…SRKINEVDNW (236 aa)). 36–43 (GPTGSGKS) is an ATP binding site.

Belongs to the ABC transporter superfamily.

This is an uncharacterized protein from Methanocaldococcus jannaschii (strain ATCC 43067 / DSM 2661 / JAL-1 / JCM 10045 / NBRC 100440) (Methanococcus jannaschii).